We begin with the raw amino-acid sequence, 632 residues long: Pescadillo homolog (632 aa).

The tract at residues 306–341 is disordered; that stretch reads GDDADVDMDEGAKETDEEEDEDFVERPSKAQEVDDV. A compositionally biased stretch (acidic residues) spans 307–328; it reads DDADVDMDEGAKETDEEEDEDF. Positions 361 to 459 constitute a BRCT domain; that stretch reads RQNLLFSPYT…KIISSEGYGP (99 aa). Disordered stretches follow at residues 485-535, 565-585, and 601-632; these read GEKA…QNPS, TKVHAKKVPASQKEKKGEEDL, and MQYSNREKAAEKEKLEKKRKAIEKRKAKEAKA. Residues 492-516 are compositionally biased toward acidic residues; the sequence is QEGEEEEEAAEQDEGESEDEEEDGK. Residues 521–531 are compositionally biased toward low complexity; it reads AEYPPALLAAA. Composition is skewed to basic and acidic residues over residues 576 to 585 and 605 to 616; these read QKEKKGEEDL and NREKAAEKEKLE. Residues 595–632 adopt a coiled-coil conformation; it reads AKLYEKMQYSNREKAAEKEKLEKKRKAIEKRKAKEAKA.

It belongs to the pescadillo family. In terms of assembly, component of the NOP7 complex, composed of ERB1, NOP7 and YTM1. The complex is held together by ERB1, which interacts with NOP7 via its N-terminal domain and with YTM1 via a high-affinity interaction between the seven-bladed beta-propeller domains of the 2 proteins. The NOP7 complex associates with the 66S pre-ribosome.

It localises to the nucleus. It is found in the nucleolus. The protein resides in the nucleoplasm. In terms of biological role, component of the NOP7 complex, which is required for maturation of the 25S and 5.8S ribosomal RNAs and formation of the 60S ribosome. This chain is Pescadillo homolog, found in Cryptococcus neoformans var. neoformans serotype D (strain B-3501A) (Filobasidiella neoformans).